The sequence spans 81 residues: MSHSVKIYDTCIGCTQCVRACPLDVLEMVPWDGCKAGQIASSPRTEDCVGCKRCETACPTDFLSIRVYLGDETTRSMGLAY.

2 4Fe-4S ferredoxin-type domains span residues 2-31 and 37-68; these read SHSVKIYDTCIGCTQCVRACPLDVLEMVPW and GQIASSPRTEDCVGCKRCETACPTDFLSIRVY. Positions 11, 14, 17, 21, 48, 51, 54, and 58 each coordinate [4Fe-4S] cluster.

The cyanobacterial PSI reaction center is composed of one copy each of PsaA,B,C,D,E,F,I,J,K,L,M and X, and forms trimeric complexes. [4Fe-4S] cluster is required as a cofactor.

The protein localises to the cellular thylakoid membrane. The enzyme catalyses reduced [plastocyanin] + hnu + oxidized [2Fe-2S]-[ferredoxin] = oxidized [plastocyanin] + reduced [2Fe-2S]-[ferredoxin]. Its function is as follows. Apoprotein for the two 4Fe-4S centers FA and FB of photosystem I (PSI); essential for photochemical activity. FB is the terminal electron acceptor of PSI, donating electrons to ferredoxin. The C-terminus interacts with PsaA/B/D and helps assemble the protein into the PSI complex. Required for binding of PsaD and PsaE to PSI. PSI is a plastocyanin/cytochrome c6-ferredoxin oxidoreductase, converting photonic excitation into a charge separation, which transfers an electron from the donor P700 chlorophyll pair to the spectroscopically characterized acceptors A0, A1, FX, FA and FB in turn. In Synechococcus sp. (strain RCC307), this protein is Photosystem I iron-sulfur center.